A 119-amino-acid polypeptide reads, in one-letter code: ETRYEKFLRQHVDYPKSSAPDSRTYCNQMMQRRGMTSPVCKFTNTFVHASAASITTVCGSGGTPASGDLRDSNASFALTTCRLQGGSQTPNCPYNADASTQRIRIACVGGLPVHYDKSI.

Substrate contacts are provided by Lys-6 and Arg-9. His-11 serves as the catalytic Proton acceptor. 3 disulfides stabilise this stretch: Cys-26-Cys-81, Cys-40-Cys-92, and Cys-58-Cys-107. Residues 41 to 45 and Arg-82 each bind substrate; that span reads KFTNT. His-114 serves as the catalytic Proton donor.

This sequence belongs to the pancreatic ribonuclease family. Monomer. Interacts with and forms tight 1:1 complexes with RNH1. Dimerization of two such complexes may occur. Interaction with RNH1 inhibits this protein. Pancreas.

Its subcellular location is the secreted. It catalyses the reaction an [RNA] containing cytidine + H2O = an [RNA]-3'-cytidine-3'-phosphate + a 5'-hydroxy-ribonucleotide-3'-[RNA].. The enzyme catalyses an [RNA] containing uridine + H2O = an [RNA]-3'-uridine-3'-phosphate + a 5'-hydroxy-ribonucleotide-3'-[RNA].. Endonuclease that catalyzes the cleavage of RNA on the 3' side of pyrimidine nucleotides. Acts on single-stranded and double-stranded RNA. The polypeptide is Ribonuclease (Chelydra serpentina (Snapping turtle)).